The primary structure comprises 294 residues: Type I ribosome-inactivating protein trichoanguina (294 aa).

Residues 1–19 (MALSFFFLAISLGSPTAIG) form the signal peptide. An N-linked (GlcNAc...) asparagine glycan is attached at Asn70. Active-site residues include Glu177 and Arg180. Asn220 carries N-linked (GlcNAc...) asparagine glycosylation. A propeptide spanning residues 265–294 (VGSEYDIPTTILHPGAMGMLHNQNGNYVTM) is cleaved from the precursor.

This sequence belongs to the ribosome-inactivating protein family. Type 1 RIP subfamily.

It catalyses the reaction Endohydrolysis of the N-glycosidic bond at one specific adenosine on the 28S rRNA.. In terms of biological role, inhibits protein synthesis by depurinating 28S rRNA in ribosomes. The chain is Type I ribosome-inactivating protein trichoanguina (TCA) from Trichosanthes anguina (Snake gourd).